Here is a 352-residue protein sequence, read N- to C-terminus: Inhibin beta C chain (352 aa).

The N-terminal stretch at 1–18 (MASSLLLALLFLTPTTVV) is a signal peptide. Positions 19-236 (NPKTEGPCPA…VEGKHRVRRR (218 aa)) are excised as a propeptide. N-linked (GlcNAc...) asparagine glycosylation is found at Asn111, Asn143, Asn161, and Asn173. 4 disulfides stabilise this stretch: Cys240–Cys248, Cys247–Cys317, Cys276–Cys349, and Cys280–Cys351.

Belongs to the TGF-beta family. Homodimeric or heterodimeric through association with alpha and beta subunits, linked by one or more disulfide bonds. Inhibins are heterodimers of one alpha and one beta subunit. Activins are homo- or heterodimers of beta subunits only. In terms of tissue distribution, mainly expressed in the adult liver.

It localises to the secreted. Functionally, inhibins and activins inhibit and activate, respectively, the secretion of follitropin by the pituitary gland. Inhibins/activins are involved in regulating a number of diverse functions such as hypothalamic and pituitary hormone secretion, gonadal hormone secretion, germ cell development and maturation, erythroid differentiation, insulin secretion, nerve cell survival, embryonic axial development or bone growth, depending on their subunit composition. Inhibins appear to oppose the functions of activins. This is Inhibin beta C chain (Inhbc) from Mus musculus (Mouse).